Reading from the N-terminus, the 2837-residue chain is Probable polyketide synthase 3 (2837 aa).

The 426-residue stretch at 39–464 folds into the Ketosynthase family 3 (KS3) domain; it reads NNGIGIIGIG…GSNVCIILKD (426 aa). Active-site for beta-ketoacyl synthase activity residues include cysteine 209, histidine 348, and histidine 388. Residues 664-697 form an acyl/malonyl transferase region; that stretch reads GIKPTFIVGHSLGEVTAAYCSGMIDLETECYLIY. Serine 674 functions as the For acyl/malonyl transferase activity in the catalytic mechanism. The segment at 962 to 1084 is N-terminal hotdog fold; sequence IDILGNSITD…GNFQLFKHNG (123 aa). Residues 962–1255 enclose the PKS/mFAS DH domain; it reads IDILGNSITD…CTSLTPIQDS (294 aa). The active-site Proton acceptor; for dehydratase activity is histidine 995. The interval 1106–1255 is C-terminal hotdog fold; it reads NLTKLTKEDL…CTSLTPIQDS (150 aa). Residue aspartate 1169 is the Proton donor; for dehydratase activity of the active site. The Carrier domain maps to 2330 to 2407; that stretch reads DNKNSVNQMF…SSIKIITNSL (78 aa). O-(pantetheine 4'-phosphoryl)serine is present on serine 2367. The helical transmembrane segment at 2464–2484 threads the bilayer; the sequence is KVILLSGSTGFLGGYLLLNLV.

Requires pantetheine 4'-phosphate as cofactor.

It is found in the membrane. In terms of biological role, probable polyketide synthase. This chain is Probable polyketide synthase 3 (pks3), found in Dictyostelium discoideum (Social amoeba).